A 196-amino-acid chain; its full sequence is dITP/XTP pyrophosphatase (196 aa).

Threonine 10–lysine 15 serves as a coordination point for substrate. The Proton acceptor role is filled by aspartate 71. Aspartate 71 provides a ligand contact to Mg(2+). Residues serine 72, phenylalanine 156–aspartate 159, lysine 179, and histidine 184–arginine 185 each bind substrate.

This sequence belongs to the HAM1 NTPase family. Homodimer. Mg(2+) serves as cofactor.

The enzyme catalyses XTP + H2O = XMP + diphosphate + H(+). It catalyses the reaction dITP + H2O = dIMP + diphosphate + H(+). It carries out the reaction ITP + H2O = IMP + diphosphate + H(+). In terms of biological role, pyrophosphatase that catalyzes the hydrolysis of nucleoside triphosphates to their monophosphate derivatives, with a high preference for the non-canonical purine nucleotides XTP (xanthosine triphosphate), dITP (deoxyinosine triphosphate) and ITP. Seems to function as a house-cleaning enzyme that removes non-canonical purine nucleotides from the nucleotide pool, thus preventing their incorporation into DNA/RNA and avoiding chromosomal lesions. The chain is dITP/XTP pyrophosphatase from Haemophilus ducreyi (strain 35000HP / ATCC 700724).